The sequence spans 339 residues: Ketol-acid reductoisomerase (NADP(+)) (339 aa).

Residues 1 to 182 (MRVYYDRDAD…GGGRAGIIET (182 aa)) enclose the KARI N-terminal Rossmann domain. Residues 24–27 (YGSQ), arginine 48, serine 51, serine 53, and 83–86 (DELQ) each bind NADP(+). Histidine 108 is a catalytic residue. Glycine 134 serves as a coordination point for NADP(+). The KARI C-terminal knotted domain maps to 183–328 (TFREECETDL…AKLRDMMPWI (146 aa)). 4 residues coordinate Mg(2+): aspartate 191, glutamate 195, glutamate 227, and glutamate 231. Position 252 (serine 252) interacts with substrate.

It belongs to the ketol-acid reductoisomerase family. Mg(2+) serves as cofactor.

The catalysed reaction is (2R)-2,3-dihydroxy-3-methylbutanoate + NADP(+) = (2S)-2-acetolactate + NADPH + H(+). The enzyme catalyses (2R,3R)-2,3-dihydroxy-3-methylpentanoate + NADP(+) = (S)-2-ethyl-2-hydroxy-3-oxobutanoate + NADPH + H(+). It functions in the pathway amino-acid biosynthesis; L-isoleucine biosynthesis; L-isoleucine from 2-oxobutanoate: step 2/4. It participates in amino-acid biosynthesis; L-valine biosynthesis; L-valine from pyruvate: step 2/4. In terms of biological role, involved in the biosynthesis of branched-chain amino acids (BCAA). Catalyzes an alkyl-migration followed by a ketol-acid reduction of (S)-2-acetolactate (S2AL) to yield (R)-2,3-dihydroxy-isovalerate. In the isomerase reaction, S2AL is rearranged via a Mg-dependent methyl migration to produce 3-hydroxy-3-methyl-2-ketobutyrate (HMKB). In the reductase reaction, this 2-ketoacid undergoes a metal-dependent reduction by NADPH to yield (R)-2,3-dihydroxy-isovalerate. The sequence is that of Ketol-acid reductoisomerase (NADP(+)) from Rhodopseudomonas palustris (strain BisB18).